Here is a 302-residue protein sequence, read N- to C-terminus: Succinate--CoA ligase [ADP-forming] subunit alpha (302 aa).

CoA is bound by residues 17–20 (TGST), K43, and 96–98 (ITE). Residue Y159 coordinates substrate. The Tele-phosphohistidine intermediate role is filled by H247.

This sequence belongs to the succinate/malate CoA ligase alpha subunit family. In terms of assembly, heterotetramer of two alpha and two beta subunits.

The catalysed reaction is succinate + ATP + CoA = succinyl-CoA + ADP + phosphate. It carries out the reaction GTP + succinate + CoA = succinyl-CoA + GDP + phosphate. It functions in the pathway carbohydrate metabolism; tricarboxylic acid cycle; succinate from succinyl-CoA (ligase route): step 1/1. In terms of biological role, succinyl-CoA synthetase functions in the citric acid cycle (TCA), coupling the hydrolysis of succinyl-CoA to the synthesis of either ATP or GTP and thus represents the only step of substrate-level phosphorylation in the TCA. The alpha subunit of the enzyme binds the substrates coenzyme A and phosphate, while succinate binding and nucleotide specificity is provided by the beta subunit. This chain is Succinate--CoA ligase [ADP-forming] subunit alpha, found in Staphylococcus aureus (strain MSSA476).